The primary structure comprises 1037 residues: Sodium/potassium exporting P-type ATPase cta3 (1037 aa).

Residues 1 to 61 (MVTINISNPV…GVSAWKVLLR (61 aa)) lie on the Cytoplasmic side of the membrane. A helical transmembrane segment spans residues 62 to 82 (QVLNAMCVVLILAAALSFGTT). A topological domain (extracellular) is located at residue D83. A helical transmembrane segment spans residues 84 to 104 (WIEGGVISAIIVLNITVGFIQ). Residues 105–281 (EYKAEKTMDS…LNVGTPLQRK (177 aa)) are Cytoplasmic-facing. Residues 282–302 (LTVLAYILFCIAIILAIIVMA) form a helical membrane-spanning segment. The Extracellular portion of the chain corresponds to 303-313 (AHSFHVTNEVS). Residues 314–334 (IYAISLGISIIPESLIAVLSI) traverse the membrane as a helical segment. At 335-760 (TMAMGQKNMS…GRRMFDNIMR (426 aa)) the chain is on the cytoplasmic side. D368 functions as the 4-aspartylphosphate intermediate in the catalytic mechanism. Residues D368 and T370 each contribute to the Mg(2+) site. Residues T370, E468, K520, R559, T620, G621, D622, R678, and K684 each contribute to the ATP site. D703 is a binding site for Mg(2+). N706 is a binding site for ATP. Residues 761 to 781 (FVLHLLVSNVGEVILLVVGLA) traverse the membrane as a helical segment. Residues 782 to 787 (FRDEVH) lie on the Extracellular side of the membrane. Residues 788-808 (LSVFPMSPVEILWCNMITSSF) form a helical membrane-spanning segment. At 809–844 (PSMGLGMELAQPDVMERLPHDNKVGIFQKSLIVDMM) the chain is on the cytoplasmic side. The helical transmembrane segment at 845–865 (VYGFFLGVVSLMTWVVIMYGF) threads the bilayer. At 866–889 (GTGNLSYDCNAHYHAGCNDVFKAR) the chain is on the extracellular side. A glycan (N-linked (GlcNAc...) asparagine) is linked at N869. The helical transmembrane segment at 890 to 910 (SAVFAVVTFCILIMAVEVKNF) threads the bilayer. Topologically, residues 911–939 (DNSLFNLHGIPWGEWNFRYFLHTLVENKF) are cytoplasmic. Residues 940-960 (LAWAIALAAVSVFPTIYIPVI) form a helical membrane-spanning segment. The Extracellular portion of the chain corresponds to 961–969 (NRDVFKHTY). The helical transmembrane segment at 970–990 (IGWEWGVVAVAVMFYFFYVEI) threads the bilayer. Residues 991 to 1037 (WKSIRRSLTNPQKKGKFRRTLSNTITTESKLSEKDLEHRLFLQSRRA) are Cytoplasmic-facing. The residue at position 1012 (S1012) is a Phosphoserine.

It belongs to the cation transport ATPase (P-type) (TC 3.A.3) family. Type IID subfamily. Mg(2+) serves as cofactor. In terms of processing, the active site is phosphorylated in presence of sodium or potassium and in conditions of higher pH. Not phosphorylated in presence of calcium ions.

The protein resides in the cell membrane. The enzyme catalyses Na(+)(in) + ATP + H2O = Na(+)(out) + ADP + phosphate + H(+). It catalyses the reaction K(+)(in) + ATP + H2O = K(+)(out) + ADP + phosphate + H(+). Functionally, catalyzes the hydrolysis of ATP coupled with the export of sodium and potassium from the cell. May export sodium less efficiently. May transport other cations such as lithium. Sodium/potassium efflux ATPases are involved in salt tolerance and maintaining the membrane potential across the plasma membrane in high salinity (Na+) or alkaline (K+) environments. In Schizosaccharomyces pombe (strain 972 / ATCC 24843) (Fission yeast), this protein is Sodium/potassium exporting P-type ATPase cta3.